The following is a 528-amino-acid chain: Cytochrome P450 1A5 (528 aa).

C467 contributes to the heme binding site.

It belongs to the cytochrome P450 family. The cofactor is heme.

It localises to the endoplasmic reticulum membrane. It is found in the microsome membrane. It carries out the reaction an organic molecule + reduced [NADPH--hemoprotein reductase] + O2 = an alcohol + oxidized [NADPH--hemoprotein reductase] + H2O + H(+). In terms of biological role, cytochromes P450 are a group of heme-thiolate monooxygenases. In liver microsomes, this enzyme is involved in an NADPH-dependent electron transport pathway. It oxidizes a variety of structurally unrelated compounds, including steroids, fatty acids, and xenobiotics. The chain is Cytochrome P450 1A5 (CYP1A5) from Gallus gallus (Chicken).